The chain runs to 173 residues: Probable DNA-directed RNA polymerase subunit delta (173 aa).

Residues 14 to 81 form the HTH HARE-type domain; that stretch reads LSMIELGVKI…GSGMWGLKRW (68 aa). Residues 86–173 are disordered; that stretch reads QAEEEITEEP…EDENDDDNTR (88 aa). Residues 109-173 show a composition bias toward acidic residues; that stretch reads IDDVDDDLDV…EDENDDDNTR (65 aa).

The protein belongs to the RpoE family. As to quaternary structure, RNAP is composed of a core of 2 alpha, a beta and a beta' subunits. The core is associated with a delta subunit and one of several sigma factors.

Its function is as follows. Participates in both the initiation and recycling phases of transcription. In the presence of the delta subunit, RNAP displays an increased specificity of transcription, a decreased affinity for nucleic acids, and an increased efficiency of RNA synthesis because of enhanced recycling. This is Probable DNA-directed RNA polymerase subunit delta from Oceanobacillus iheyensis (strain DSM 14371 / CIP 107618 / JCM 11309 / KCTC 3954 / HTE831).